Reading from the N-terminus, the 72-residue chain is UPF0352 protein HI_0840 (72 aa).

This sequence belongs to the UPF0352 family.

This is UPF0352 protein HI_0840 from Haemophilus influenzae (strain ATCC 51907 / DSM 11121 / KW20 / Rd).